The sequence spans 116 residues: S-adenosylmethionine decarboxylase proenzyme (116 aa).

The active-site Schiff-base intermediate with substrate; via pyruvic acid is S63. S63 carries the post-translational modification Pyruvic acid (Ser); by autocatalysis. H68 functions as the Proton acceptor; for processing activity in the catalytic mechanism. C83 serves as the catalytic Proton donor; for catalytic activity.

It belongs to the prokaryotic AdoMetDC family. Type 1 subfamily. In terms of assembly, heterotetramer of two alpha and two beta chains arranged as a dimer of alpha/beta heterodimers. Pyruvate serves as cofactor. Post-translationally, is synthesized initially as an inactive proenzyme. Formation of the active enzyme involves a self-maturation process in which the active site pyruvoyl group is generated from an internal serine residue via an autocatalytic post-translational modification. Two non-identical subunits are generated from the proenzyme in this reaction, and the pyruvate is formed at the N-terminus of the alpha chain, which is derived from the carboxyl end of the proenzyme. The post-translation cleavage follows an unusual pathway, termed non-hydrolytic serinolysis, in which the side chain hydroxyl group of the serine supplies its oxygen atom to form the C-terminus of the beta chain, while the remainder of the serine residue undergoes an oxidative deamination to produce ammonia and the pyruvoyl group blocking the N-terminus of the alpha chain.

The enzyme catalyses S-adenosyl-L-methionine + H(+) = S-adenosyl 3-(methylsulfanyl)propylamine + CO2. Its pathway is amine and polyamine biosynthesis; S-adenosylmethioninamine biosynthesis; S-adenosylmethioninamine from S-adenosyl-L-methionine: step 1/1. Its function is as follows. Catalyzes the decarboxylation of S-adenosylmethionine to S-adenosylmethioninamine (dcAdoMet), the propylamine donor required for the synthesis of the polyamines spermine and spermidine from the diamine putrescine. The chain is S-adenosylmethionine decarboxylase proenzyme from Clostridium botulinum (strain ATCC 19397 / Type A).